Reading from the N-terminus, the 555-residue chain is MIWVAVIITMLLFILVAKPTGIYLEKAFQGSKTLDKVFGPFEKLIFKITGVKAYNQTWKQYALSLVLLNGFMIVVVYFIFRLQGVLPLNPAHIEGMEPTLAFNTAISFMADTNLQHYSGENGLSYLSQLIGITFLMFAAPATTLALVMAFIRGLAGKELGNFFVDFTRALTRVFLPIAFIAALVFVALGVPQTLDGAVTAQTIEGAKQSILRGPVASFVSIKELGNNGGGFFGANSTHPFENPGQMSNILQMMLMMLLPTALPFTYGRMVGNKKQGRILFVSLFMVFLLGFITITTSELNGNPALNGMGIEHVQGSTEGKEVRFGTVFSSLYATVTTAAETGAVNTMHDTLTPIGGLVPLVNMMLNTVYGGVGAGFVNIIMYAIIAVFISGLMVGRTPEFLGKKIEGKEMKLIAVTILFHPLLILGFSALALSTNLGTDAISHSGFHGLTQVVYEYTSSAANNGSGFEGLGDNTPFWNITTGLVMFLGRYFSLITMLAVAASLKEKTVVPETVGTFRTDNSLFGGIFIGTIVIVGALTFFPMLVLGPIAEFLTLK.

10 consecutive transmembrane segments (helical) span residues 2-22, 60-80, 130-150, 173-193, 246-266, 278-298, 374-394, 412-432, 483-503, and 525-545; these read IWVA…PTGI, QYAL…YFIF, IGIT…VMAF, VFLP…VPQT, MSNI…PFTY, ILFV…TTSE, AGFV…GLMV, LIAV…ALAL, LVMF…AASL, and GIFI…MLVL.

The protein belongs to the KdpA family. As to quaternary structure, the system is composed of three essential subunits: KdpA, KdpB and KdpC.

The protein localises to the cell membrane. Part of the high-affinity ATP-driven potassium transport (or Kdp) system, which catalyzes the hydrolysis of ATP coupled with the electrogenic transport of potassium into the cytoplasm. This subunit binds the extracellular potassium ions and delivers the ions to the membrane domain of KdpB through an intramembrane tunnel. This Bacillus cereus (strain G9842) protein is Potassium-transporting ATPase potassium-binding subunit.